The primary structure comprises 43 residues: Protein PsbN (43 aa).

Residues Ile7–Pro29 form a helical membrane-spanning segment.

Belongs to the PsbN family.

It is found in the plastid. The protein localises to the chloroplast thylakoid membrane. In terms of biological role, may play a role in photosystem I and II biogenesis. In Phaeodactylum tricornutum (strain CCAP 1055/1), this protein is Protein PsbN.